The chain runs to 123 residues: Small ribosomal subunit protein uS12 (123 aa).

Position 89 is a 3-methylthioaspartic acid (Asp-89).

Belongs to the universal ribosomal protein uS12 family. As to quaternary structure, part of the 30S ribosomal subunit. Contacts proteins S8 and S17. May interact with IF1 in the 30S initiation complex.

Its function is as follows. With S4 and S5 plays an important role in translational accuracy. Functionally, interacts with and stabilizes bases of the 16S rRNA that are involved in tRNA selection in the A site and with the mRNA backbone. Located at the interface of the 30S and 50S subunits, it traverses the body of the 30S subunit contacting proteins on the other side and probably holding the rRNA structure together. The combined cluster of proteins S8, S12 and S17 appears to hold together the shoulder and platform of the 30S subunit. In Methylobacterium sp. (strain 4-46), this protein is Small ribosomal subunit protein uS12.